Here is a 790-residue protein sequence, read N- to C-terminus: MFAPANQTHFSLRIENLRHDFQVLAFRGREAISQPFRFDLELVSERSDLDLDALLHQPAFLILSPSGQGVHGQLTSIAQGDSGKRLTGYRATLEPRLAYLGLCSDQRIFQRLSVPEIIGRVLEGHGILADAYRFQLGPTPYPAREYCTQYDETDLAFLSRLCEEEGIHYHHEFSAQGHVLVFGDDQTSFPRLQRPVAYVQDAGLVADQPVVKRFGVRFDTRASRVTRRDYDFEQPALQMQAAHGPQPGAQQPDLEDYDYPGRFTHRERGKHLSHRALERHRADYLQARGESDEPALLSGHFLTLSAHPRGEWNDLWLLTEVLHEGRQPQVLEESIDSDVAQGQGDFRQGYRNHFVATPWSAHFRPPLEHPRPRVLGCQTAVVTGPAGETIHCDQYGRVKVQFFWDRLGQADDNTSCWLRVASNWGGKRYGGVAIPRVGMEVLVGFLEGDPDQPLVTGCLYHSENRVPYELPQNKTRSVFKTDSYPGGGGFNELRIEDRKGQEQIFVHAQRDWDENIEHDQKIRVGHERHDTVEGDSYSEFRAEEQRTVHADRKVELKAADHLSVADALHLRIGTGQFVEAGDEIHFKAGDKVVIEAGMELTLKGGGSFARLDPGGVTLDGAQVMINSGGSPGIGSGVRALSPLQPLAADAAAAGGALLGAIAQKIGEAPQKLLRFELSPLPGVASAARQPYRLYANGAFKEEGIADEGGAISFEPLPGERTYRIETANGHAYEVEMVDQPDALQADDRLAQQGFRDYRAEMPQHKPRSAPDAYRRDASRPGAADKDEPTP.

2 stretches are compositionally biased toward basic and acidic residues: residues 753-763 (GFRDYRAEMPQ) and 772-790 (AYRRDASRPGAADKDEPTP). Positions 753–790 (GFRDYRAEMPQHKPRSAPDAYRRDASRPGAADKDEPTP) are disordered.

Belongs to the VgrG protein family.

The protein localises to the secreted. In terms of biological role, part of the H2 type VI secretion system (H2-T6SS) specialized secretion system, which delivers several virulence factors in both prokaryotic and eukaryotic cells during infection. Allows the delivery of the phospholipase effector PldB to target cells where it exerts its toxicity. Also plays a role in VgrG4b and its effector PldA secretion. The sequence is that of Type VI secretion system spike protein VgrG5 from Pseudomonas aeruginosa (strain ATCC 15692 / DSM 22644 / CIP 104116 / JCM 14847 / LMG 12228 / 1C / PRS 101 / PAO1).